Reading from the N-terminus, the 130-residue chain is Albumin-1 D (130 aa).

A signal peptide spans Met1–Ala26. Intrachain disulfides connect Cys29-Cys46, Cys33-Cys48, and Cys41-Cys58. 2 propeptides span residues Val64–Asn69 and Leu123–Ala130.

In terms of processing, the C-terminal glycine may be removed from PA1b. Major component of both the cotyledons and embryonic axes of mature seeds.

Its function is as follows. PA1b binds to basic 7S globulin (BG) and stimulates its phosphorylation activity. Involved in the signal transduction system to regulate the growth and differentiation as a hormone peptide. Toxic to various insects through binding to a high affinity binding site in the insect gut. In Pisum sativum (Garden pea), this protein is Albumin-1 D.